The primary structure comprises 276 residues: UPF0328 protein ECU08_2080 (276 aa).

Residues 1–24 are disordered; the sequence is MGIIDVQRSHLTATPSKERDAPAH.

This sequence belongs to the UPF0328 family.

In Encephalitozoon cuniculi (strain GB-M1) (Microsporidian parasite), this protein is UPF0328 protein ECU08_2080.